A 228-amino-acid chain; its full sequence is Triosephosphate isomerase (228 aa).

Position 9-11 (9-11 (NFK)) interacts with substrate. Catalysis depends on H93, which acts as the Electrophile. The Proton acceptor role is filled by E141. Residues I146, G181, and 202–203 (AS) contribute to the substrate site.

This sequence belongs to the triosephosphate isomerase family. In terms of assembly, homotetramer; dimer of dimers.

It localises to the cytoplasm. It catalyses the reaction D-glyceraldehyde 3-phosphate = dihydroxyacetone phosphate. It participates in carbohydrate biosynthesis; gluconeogenesis. The protein operates within carbohydrate degradation; glycolysis; D-glyceraldehyde 3-phosphate from glycerone phosphate: step 1/1. In terms of biological role, involved in the gluconeogenesis. Catalyzes stereospecifically the conversion of dihydroxyacetone phosphate (DHAP) to D-glyceraldehyde-3-phosphate (G3P). The polypeptide is Triosephosphate isomerase (Pyrobaculum calidifontis (strain DSM 21063 / JCM 11548 / VA1)).